The chain runs to 285 residues: 4-diphosphocytidyl-2-C-methyl-D-erythritol kinase (285 aa).

Residue K12 is part of the active site. Position 95-105 (95-105 (PVGAGLAGGST)) interacts with ATP. Residue D137 is part of the active site.

The protein belongs to the GHMP kinase family. IspE subfamily.

The enzyme catalyses 4-CDP-2-C-methyl-D-erythritol + ATP = 4-CDP-2-C-methyl-D-erythritol 2-phosphate + ADP + H(+). It participates in isoprenoid biosynthesis; isopentenyl diphosphate biosynthesis via DXP pathway; isopentenyl diphosphate from 1-deoxy-D-xylulose 5-phosphate: step 3/6. Its function is as follows. Catalyzes the phosphorylation of the position 2 hydroxy group of 4-diphosphocytidyl-2C-methyl-D-erythritol. The protein is 4-diphosphocytidyl-2-C-methyl-D-erythritol kinase of Syntrophomonas wolfei subsp. wolfei (strain DSM 2245B / Goettingen).